The following is a 174-amino-acid chain: Adenine phosphoribosyltransferase (174 aa).

Belongs to the purine/pyrimidine phosphoribosyltransferase family. As to quaternary structure, homodimer.

It is found in the cytoplasm. The enzyme catalyses AMP + diphosphate = 5-phospho-alpha-D-ribose 1-diphosphate + adenine. It functions in the pathway purine metabolism; AMP biosynthesis via salvage pathway; AMP from adenine: step 1/1. Functionally, catalyzes a salvage reaction resulting in the formation of AMP, that is energically less costly than de novo synthesis. The sequence is that of Adenine phosphoribosyltransferase from Dichelobacter nodosus (strain VCS1703A).